Consider the following 1744-residue polypeptide: Complement C4-B (1744 aa).

Residues 1–19 (MRLLWGLIWASSFFTLSLQ) form the signal peptide. A disulfide bond links Cys-68 and Cys-97. A glycan (N-linked (GlcNAc...) asparagine) is linked at Asn-226. Cys-635 and Cys-669 are joined by a disulfide. Residues 676 to 679 (RKKR) constitute a propeptide that is removed on maturation. Intrachain disulfides connect Cys-702/Cys-728, Cys-703/Cys-735, and Cys-716/Cys-736. One can recognise an Anaphylatoxin-like domain in the interval 702 to 736 (CCQDGVTRLPMMRSCEQRAARVQQPDCREPFLSCC). Residue Asn-862 is glycosylated (N-linked (GlcNAc...) asparagine). Residue Ser-918 is modified to Phosphoserine. A cross-link (isoglutamyl cysteine thioester (Cys-Gln)) is located at residues 1010 to 1013 (CGEQ). N-linked (GlcNAc...) asparagine glycosylation is found at Asn-1328 and Asn-1391. A sulfotyrosine mark is found at Tyr-1417, Tyr-1420, and Tyr-1422. Positions 1447–1453 (RRNRRRR) are excised as a propeptide. 5 disulfide bridges follow: Cys-1471/Cys-1535, Cys-1583/Cys-1588, Cys-1595/Cys-1673, Cys-1618/Cys-1742, and Cys-1718/Cys-1727. In terms of domain architecture, NTR spans 1595-1742 (CPRQRRALER…FLQEYGTQGC (148 aa)).

As to quaternary structure, in absence of complement activation, circulates in blood as a disulfide-linked trimer of an alpha, beta and gamma chain. Complement C4b is composed of complement C4b-A, complement C4 beta and complement C4 gamma chains that are associated via disulfide bonds. Non-enzymatic component of the C3 convertase, also named C4bC2b, composed of the serine protease complement C2b (C2), as well as complement C4b. Non-enzymatic component of the C5 convertase, also named C4bC2bC3b, composed of the serine protease complement C2b (C2), complement C3b, as well as complement C4b. Interacts with CR1 (via Sushi 1 and Sushi 2 domains). In terms of assembly, (Microbial infection) Binds B.burgdorferi OspC, the interaction is inhibited by complement factor C2. This binding may inhibit the complement cascade and allow the bacteria to survive in the host bloodstream. Post-translationally, prior to secretion, the single-chain precursor is enzymatically cleaved by plasminogen (PLG) to yield non-identical chains alpha, beta and gamma. During activation of the complement systems, the alpha chain is cleaved into C4a and C4b by different proteases depending on the complement pathway: C4b stays linked to the beta and gamma chains, while C4a is released in the plasma. The alpha chain is cleaved by C1S to generate C4a and C4b following activation by the classical complement system. The alpha chain is cleaved to generate C4a and C4b by MASP2 following activation by the lectin complement system. The alpha chain is cleaved by GZMK to generate C4a and C4b following activation by the GZMK complement system. Further degradation of C4b by C1 into the inactive fragments C4c and C4d blocks the generation of C3 convertase. The proteolytic cleavages often are incomplete so that many structural forms can be found in plasma. In terms of processing, upon activation, the internal thioester bond reacts with carbohydrate antigens on the target surface to form amide or ester bonds, leading to covalent association with the surface of pathogens. Complement C4b interacts with complement C3b via a thioester linkage. Post-translationally, N- and O-glycosylated. O-glycosylated with a core 1 or possibly core 8 glycan. Complement component C4 is expressed at highest levels in the liver, at moderate levels in the adrenal cortex, adrenal medulla, thyroid gland, and the kidney, and at lowest levels in the heart, ovary, small intestine, thymus, pancreas and spleen. The extra-hepatic sites of expression may be important for the local protection and inflammatory response.

It is found in the secreted. The protein localises to the synapse. It localises to the cell projection. Its subcellular location is the axon. The protein resides in the dendrite. It is found in the cell surface. Precursor of non-enzymatic components of the classical, lectin and GZMK complement pathways, which consist in a cascade of proteins that leads to phagocytosis and breakdown of pathogens and signaling that strengthens the adaptive immune system. Functionally, non-enzymatic component of C3 and C5 convertases. Generated following cleavage by complement proteases (C1S, MASP2 or GZMK, depending on the complement pathway), it covalently attaches to the surface of pathogens, where it acts as an opsonin that marks the surface of antigens for removal. It then recruits the serine protease complement C2b to form the C3 and C5 convertases, which cleave and activate C3 and C5, respectively, the next components of the complement pathways. Complement C4b-B isotype catalyzes the transacylation of the thioester carbonyl group to form ester bonds with carbohydrate antigens, while C4b-A isotype is responsible for effective binding to form amide bonds with immune aggregates or protein antigens. In terms of biological role, putative humoral mediator released following cleavage by complement proteases (C1S, MASP2 or GZMK, depending on the complement pathway). While it is strongly similar to anaphylatoxins, its role is unclear. Was reported to act as a mediator of local inflammatory process; however these effects were probably due to contamination with C3a and/C5a anaphylatoxins in biological assays. This chain is Complement C4-B, found in Homo sapiens (Human).